A 492-amino-acid chain; its full sequence is GTPase Der (492 aa).

EngA-type G domains are found at residues 3–167 and 207–382; these read FTLA…EKFE and LQVA…DVWN. Residues 9–16, 56–60, 119–122, 213–220, 260–264, and 325–328 each bind GTP; these read GRPNVGKS, DSAGL, NKSE, GRPNAGKS, DTAGM, and NKWD. The KH-like domain maps to 383–469; it reads RRVPTAALNR…RLTLRGQGDK (87 aa). A disordered region spans residues 461–492; the sequence is LTLRGQGDKNPYKGKKKSTPSRLRKHLEGRKS. Basic residues predominate over residues 472-492; sequence YKGKKKSTPSRLRKHLEGRKS.

It belongs to the TRAFAC class TrmE-Era-EngA-EngB-Septin-like GTPase superfamily. EngA (Der) GTPase family. In terms of assembly, associates with the 50S ribosomal subunit.

In terms of biological role, GTPase that plays an essential role in the late steps of ribosome biogenesis. In Ruegeria sp. (strain TM1040) (Silicibacter sp.), this protein is GTPase Der.